Reading from the N-terminus, the 190-residue chain is Protein LZIC (190 aa).

Residues 2-63 (ASRGKTETSK…SEFNDSLKKI (62 aa)) are a coiled coil.

It belongs to the CTNNBIP1 family. Does not interact with CTNNB1.

This is Protein LZIC (Lzic) from Rattus norvegicus (Rat).